The following is a 492-amino-acid chain: Proline--tRNA ligase (492 aa).

It belongs to the class-II aminoacyl-tRNA synthetase family. ProS type 3 subfamily. As to quaternary structure, homodimer.

It localises to the cytoplasm. It catalyses the reaction tRNA(Pro) + L-proline + ATP = L-prolyl-tRNA(Pro) + AMP + diphosphate. In terms of biological role, catalyzes the attachment of proline to tRNA(Pro) in a two-step reaction: proline is first activated by ATP to form Pro-AMP and then transferred to the acceptor end of tRNA(Pro). The chain is Proline--tRNA ligase from Christiangramia forsetii (strain DSM 17595 / CGMCC 1.15422 / KT0803) (Gramella forsetii).